We begin with the raw amino-acid sequence, 211 residues long: SAGA-associated factor 11 homolog 2 (211 aa).

The SGF11-type zinc-finger motif lies at 115–136; the sequence is CTCPNCDRLVAAARFAPHLEKC. Positions 149 to 211 are disordered; that stretch reads RRLATKEGSS…GSKKNNGKTF (63 aa). Residues 157–166 show a composition bias toward low complexity; sequence SSASTSSTST. Ser-187 carries the post-translational modification Phosphoserine. Over residues 197 to 211 the composition is skewed to low complexity; the sequence is SSRNNGSKKNNGKTF.

Belongs to the SGF11 family. Component of some SAGA transcription coactivator-HAT complexes, at least composed of Ada2b, not/nonstop, Pcaf/Gcn5, Sgf11 and Spt3. Within the SAGA complex, Sgf11, e(y)2, and not/nonstop form an additional subcomplex of SAGA called the DUB module (deubiquitination module). Interacts directly with not/nonstop. Interacts with the AMEX complex component xmas-2. Interacts with Cbp80; important for promoter recruitment of Sgf11 that is not associated with the DUB module.

Its subcellular location is the nucleus. It is found in the nucleoplasm. The protein localises to the cytoplasm. Functionally, component of the transcription regulatory histone acetylation (HAT) complex SAGA, a multiprotein complex that activates transcription by remodeling chromatin and mediating histone acetylation and deubiquitination. Within the SAGA complex, participates in a subcomplex that specifically deubiquitinates histone H2B. The SAGA complex is recruited to specific gene promoters by activators, where it is required for transcription. Required for nuclear receptor-mediated transactivation. Binds independently on SAGA to promoters in an RNA-dependent manner. Binds to mRNA and is essential for total mRNA export from the nucleus. Required to counteract heterochromatin silencing. Controls the development of neuronal connectivity in visual system by being required for accurate axon targeting in the optic lobe. Required for expression of ecdysone-induced genes such as br/broad. This chain is SAGA-associated factor 11 homolog 2, found in Drosophila grimshawi (Hawaiian fruit fly).